Here is a 155-residue protein sequence, read N- to C-terminus: Transcriptional repressor NrdR (155 aa).

A zinc finger lies at Cys3–Cys34. The 91-residue stretch at Pro49–Glu139 folds into the ATP-cone domain.

This sequence belongs to the NrdR family. The cofactor is Zn(2+).

Functionally, negatively regulates transcription of bacterial ribonucleotide reductase nrd genes and operons by binding to NrdR-boxes. The polypeptide is Transcriptional repressor NrdR (Ectopseudomonas mendocina (strain ymp) (Pseudomonas mendocina)).